The primary structure comprises 347 residues: GMP reductase (347 aa).

108–131 (ADFQKTKDIMALTDDLIFICVDIA) is a binding site for NADP(+). K(+)-binding residues include G181 and G183. C186 functions as the Thioimidate intermediate in the catalytic mechanism. 216 to 239 (IIGDGGCSCAGDVSKAFGGGADFV) is a binding site for NADP(+).

Belongs to the IMPDH/GMPR family. GuaC type 1 subfamily. As to quaternary structure, homotetramer.

It catalyses the reaction IMP + NH4(+) + NADP(+) = GMP + NADPH + 2 H(+). Its function is as follows. Catalyzes the irreversible NADPH-dependent deamination of GMP to IMP. It functions in the conversion of nucleobase, nucleoside and nucleotide derivatives of G to A nucleotides, and in maintaining the intracellular balance of A and G nucleotides. In Aliivibrio salmonicida (strain LFI1238) (Vibrio salmonicida (strain LFI1238)), this protein is GMP reductase.